Reading from the N-terminus, the 512-residue chain is Eukaryotic translation initiation factor 3 subunit L (512 aa).

A PCI domain is found at 291–477 (DAFRLFESIL…GERQFTDSVD (187 aa)).

This sequence belongs to the eIF-3 subunit L family. As to quaternary structure, component of the eukaryotic translation initiation factor 3 (eIF-3) complex.

It is found in the cytoplasm. In terms of biological role, component of the eukaryotic translation initiation factor 3 (eIF-3) complex, which is involved in protein synthesis of a specialized repertoire of mRNAs and, together with other initiation factors, stimulates binding of mRNA and methionyl-tRNAi to the 40S ribosome. The eIF-3 complex specifically targets and initiates translation of a subset of mRNAs involved in cell proliferation. The chain is Eukaryotic translation initiation factor 3 subunit L from Monosiga brevicollis (Choanoflagellate).